The primary structure comprises 348 residues: Dihydroorotase (348 aa).

Residues histidine 17 and histidine 19 each contribute to the Zn(2+) site. Residues 19-21 (HLR) and asparagine 45 contribute to the substrate site. Lysine 103, histidine 140, and histidine 178 together coordinate Zn(2+). The residue at position 103 (lysine 103) is an N6-carboxylysine. Histidine 140 contacts substrate. Leucine 223 is a substrate binding site. Aspartate 251 is a Zn(2+) binding site. Residue aspartate 251 is part of the active site. Residues histidine 255 and alanine 267 each coordinate substrate.

This sequence belongs to the metallo-dependent hydrolases superfamily. DHOase family. Class II DHOase subfamily. As to quaternary structure, homodimer. It depends on Zn(2+) as a cofactor.

The catalysed reaction is (S)-dihydroorotate + H2O = N-carbamoyl-L-aspartate + H(+). It participates in pyrimidine metabolism; UMP biosynthesis via de novo pathway; (S)-dihydroorotate from bicarbonate: step 3/3. Functionally, catalyzes the reversible cyclization of carbamoyl aspartate to dihydroorotate. The sequence is that of Dihydroorotase from Salmonella paratyphi C (strain RKS4594).